We begin with the raw amino-acid sequence, 520 residues long: Ribonuclease Y (520 aa).

The chain crosses the membrane as a helical span at residues 3–23; the sequence is IEIQWIGIGAAFLVGAIGGAL. Residues 210–273 form the KH domain; that stretch reads AVSVVPLPND…EVARLALERL (64 aa). The HD domain occupies 336–429; sequence VLQHSIEVAF…VQAADALSGA (94 aa).

The protein belongs to the RNase Y family.

The protein localises to the cell membrane. Endoribonuclease that initiates mRNA decay. In Syntrophotalea carbinolica (strain DSM 2380 / NBRC 103641 / GraBd1) (Pelobacter carbinolicus), this protein is Ribonuclease Y.